A 492-amino-acid chain; its full sequence is 3-octaprenyl-4-hydroxybenzoate carboxy-lyase (492 aa).

Asn-177 serves as a coordination point for Mn(2+). Prenylated FMN-binding positions include 180–182, 194–196, and 199–200; these read IYR, RWL, and RG. Glu-243 is a binding site for Mn(2+). Asp-292 (proton donor) is an active-site residue.

This sequence belongs to the UbiD family. In terms of assembly, homohexamer. It depends on prenylated FMN as a cofactor. The cofactor is Mn(2+).

Its subcellular location is the cell membrane. The enzyme catalyses a 4-hydroxy-3-(all-trans-polyprenyl)benzoate + H(+) = a 2-(all-trans-polyprenyl)phenol + CO2. It participates in cofactor biosynthesis; ubiquinone biosynthesis. Catalyzes the decarboxylation of 3-octaprenyl-4-hydroxy benzoate to 2-octaprenylphenol, an intermediate step in ubiquinone biosynthesis. This chain is 3-octaprenyl-4-hydroxybenzoate carboxy-lyase, found in Neisseria meningitidis serogroup A / serotype 4A (strain DSM 15465 / Z2491).